Reading from the N-terminus, the 289-residue chain is Ubiquinone biosynthesis O-methyltransferase (289 aa).

An S-adenosyl-L-methionine-binding site is contributed by Arg36. Residues 50-98 (RHLSKLTYREELVGNMQHSTAAYALVREDASSRLTHKLPLEAEFEKMSN) form the RPE1 insert domain. 3 residues coordinate S-adenosyl-L-methionine: Gly109, Asp130, and Leu172.

The protein belongs to the methyltransferase superfamily. UbiG/COQ3 family.

The enzyme catalyses a 3-demethylubiquinol + S-adenosyl-L-methionine = a ubiquinol + S-adenosyl-L-homocysteine + H(+). It catalyses the reaction a 3-(all-trans-polyprenyl)benzene-1,2-diol + S-adenosyl-L-methionine = a 2-methoxy-6-(all-trans-polyprenyl)phenol + S-adenosyl-L-homocysteine + H(+). It functions in the pathway cofactor biosynthesis; ubiquinone biosynthesis. In terms of biological role, O-methyltransferase that catalyzes the 2 O-methylation steps in the ubiquinone biosynthetic pathway. The chain is Ubiquinone biosynthesis O-methyltransferase from Rickettsia conorii (strain ATCC VR-613 / Malish 7).